A 490-amino-acid chain; its full sequence is 3-octaprenyl-4-hydroxybenzoate carboxy-lyase (490 aa).

Residue Asn172 coordinates Mn(2+). Residues 175-177, 189-191, and 194-195 each bind prenylated FMN; these read IYR, RWL, and RG. Residue Glu238 coordinates Mn(2+). Catalysis depends on Asp287, which acts as the Proton donor.

It belongs to the UbiD family. Homohexamer. Requires prenylated FMN as cofactor. Mn(2+) serves as cofactor.

Its subcellular location is the cell membrane. The enzyme catalyses a 4-hydroxy-3-(all-trans-polyprenyl)benzoate + H(+) = a 2-(all-trans-polyprenyl)phenol + CO2. Its pathway is cofactor biosynthesis; ubiquinone biosynthesis. Functionally, catalyzes the decarboxylation of 3-octaprenyl-4-hydroxy benzoate to 2-octaprenylphenol, an intermediate step in ubiquinone biosynthesis. The chain is 3-octaprenyl-4-hydroxybenzoate carboxy-lyase from Idiomarina loihiensis (strain ATCC BAA-735 / DSM 15497 / L2-TR).